Here is a 43-residue protein sequence, read N- to C-terminus: Cytochrome b559 subunit beta (43 aa).

The helical transmembrane segment at 18–34 (WLAIHGLAIPTVFFLGG) threads the bilayer. H22 lines the heme pocket.

Belongs to the PsbE/PsbF family. Heterodimer of an alpha subunit and a beta subunit. PSII is composed of 1 copy each of membrane proteins PsbA, PsbB, PsbC, PsbD, PsbE, PsbF, PsbH, PsbI, PsbJ, PsbK, PsbL, PsbM, PsbT, PsbX, PsbY, PsbZ, Psb30/Ycf12, at least 3 peripheral proteins of the oxygen-evolving complex and a large number of cofactors. It forms dimeric complexes. It depends on heme b as a cofactor.

It is found in the plastid. It localises to the chloroplast thylakoid membrane. Its function is as follows. This b-type cytochrome is tightly associated with the reaction center of photosystem II (PSII). PSII is a light-driven water:plastoquinone oxidoreductase that uses light energy to abstract electrons from H(2)O, generating O(2) and a proton gradient subsequently used for ATP formation. It consists of a core antenna complex that captures photons, and an electron transfer chain that converts photonic excitation into a charge separation. In Phaeodactylum tricornutum (strain CCAP 1055/1), this protein is Cytochrome b559 subunit beta.